A 498-amino-acid chain; its full sequence is ATP synthase subunit beta, chloroplastic (498 aa).

172–179 (GGAGVGKT) contacts ATP.

This sequence belongs to the ATPase alpha/beta chains family. In terms of assembly, F-type ATPases have 2 components, CF(1) - the catalytic core - and CF(0) - the membrane proton channel. CF(1) has five subunits: alpha(3), beta(3), gamma(1), delta(1), epsilon(1). CF(0) has four main subunits: a(1), b(1), b'(1) and c(9-12).

Its subcellular location is the plastid. It is found in the chloroplast thylakoid membrane. The catalysed reaction is ATP + H2O + 4 H(+)(in) = ADP + phosphate + 5 H(+)(out). Functionally, produces ATP from ADP in the presence of a proton gradient across the membrane. The catalytic sites are hosted primarily by the beta subunits. This is ATP synthase subunit beta, chloroplastic from Triticum aestivum (Wheat).